Reading from the N-terminus, the 221-residue chain is Orotate phosphoribosyltransferase (221 aa).

A 5-phospho-alpha-D-ribose 1-diphosphate-binding site is contributed by K26. 34–35 (FF) is a binding site for orotate. Residues 72–73 (YK), R98, K99, K102, H104, and 123–131 (DDVISAGTS) each bind 5-phospho-alpha-D-ribose 1-diphosphate. Orotate-binding residues include S127 and R155.

Belongs to the purine/pyrimidine phosphoribosyltransferase family. PyrE subfamily. Homodimer. The cofactor is Mg(2+).

It catalyses the reaction orotidine 5'-phosphate + diphosphate = orotate + 5-phospho-alpha-D-ribose 1-diphosphate. It participates in pyrimidine metabolism; UMP biosynthesis via de novo pathway; UMP from orotate: step 1/2. Its function is as follows. Catalyzes the transfer of a ribosyl phosphate group from 5-phosphoribose 1-diphosphate to orotate, leading to the formation of orotidine monophosphate (OMP). The polypeptide is Orotate phosphoribosyltransferase (Janthinobacterium sp. (strain Marseille) (Minibacterium massiliensis)).